The chain runs to 325 residues: Tetraacyldisaccharide 4'-kinase (325 aa).

Thr-55–Thr-62 is an ATP binding site.

The protein belongs to the LpxK family.

The catalysed reaction is a lipid A disaccharide + ATP = a lipid IVA + ADP + H(+). It functions in the pathway glycolipid biosynthesis; lipid IV(A) biosynthesis; lipid IV(A) from (3R)-3-hydroxytetradecanoyl-[acyl-carrier-protein] and UDP-N-acetyl-alpha-D-glucosamine: step 6/6. Functionally, transfers the gamma-phosphate of ATP to the 4'-position of a tetraacyldisaccharide 1-phosphate intermediate (termed DS-1-P) to form tetraacyldisaccharide 1,4'-bis-phosphate (lipid IVA). This is Tetraacyldisaccharide 4'-kinase from Salmonella paratyphi B (strain ATCC BAA-1250 / SPB7).